Reading from the N-terminus, the 187-residue chain is Small ribosomal subunit protein uS5 (187 aa).

Residues 20–83 (FADRLVAINR…EQAKRQMIRV (64 aa)) form the S5 DRBM domain. The interval 155-187 (KKEQSPRSVAQRRGKKVADILPKRDEAPAEAEA) is disordered. The span at 170-181 (KVADILPKRDEA) shows a compositional bias: basic and acidic residues.

It belongs to the universal ribosomal protein uS5 family. As to quaternary structure, part of the 30S ribosomal subunit. Contacts proteins S4 and S8.

Its function is as follows. With S4 and S12 plays an important role in translational accuracy. Functionally, located at the back of the 30S subunit body where it stabilizes the conformation of the head with respect to the body. This Ruegeria sp. (strain TM1040) (Silicibacter sp.) protein is Small ribosomal subunit protein uS5.